Reading from the N-terminus, the 166-residue chain is Amblin (166 aa).

A signal peptide spans 1–15 (MGFLVASAVLVCVTS). 2 BPTI/Kunitz inhibitor domains span residues 22–72 (CKKK…REAC) and 82–132 (CKQM…MKKC). Cystine bridges form between Cys-22–Cys-72, Cys-31–Cys-55, Cys-47–Cys-68, Cys-82–Cys-132, Cys-91–Cys-115, and Cys-107–Cys-128.

It is found in the secreted. Its function is as follows. Thrombin-specific inhibitor from tick hemolymph (Ki=20 nM). This chain is Amblin, found in Amblyomma hebraeum (South African bont tick).